Consider the following 437-residue polypeptide: GTPase HflX (437 aa).

Positions 150-173 are disordered; sequence DRQGGGSGGGKGGGGAARGEGEKQ. The segment covering 152–167 has biased composition (gly residues); that stretch reads QGGGSGGGKGGGGAAR. The Hflx-type G domain occupies 212–382; the sequence is ATAAIVGYTN…ACVEMLESRV (171 aa). GTP is bound by residues 218–225, 243–247, 265–268, 331–334, and 360–362; these read GYTNAGKS, FATLD, DTVG, NKVD, and SVK. 2 residues coordinate Mg(2+): Ser-225 and Thr-245.

It belongs to the TRAFAC class OBG-HflX-like GTPase superfamily. HflX GTPase family. Monomer. Associates with the 50S ribosomal subunit. Requires Mg(2+) as cofactor.

The protein localises to the cytoplasm. GTPase that associates with the 50S ribosomal subunit and may have a role during protein synthesis or ribosome biogenesis. In Akkermansia muciniphila (strain ATCC BAA-835 / DSM 22959 / JCM 33894 / BCRC 81048 / CCUG 64013 / CIP 107961 / Muc), this protein is GTPase HflX.